Reading from the N-terminus, the 250-residue chain is Triosephosphate isomerase (250 aa).

Residue 10 to 12 participates in substrate binding; that stretch reads NWK. Histidine 96 (electrophile) is an active-site residue. Glutamate 168 acts as the Proton acceptor in catalysis. Substrate is bound by residues glycine 174, serine 214, and 235–236; that span reads GG.

The protein belongs to the triosephosphate isomerase family. In terms of assembly, homodimer.

It localises to the cytoplasm. The catalysed reaction is D-glyceraldehyde 3-phosphate = dihydroxyacetone phosphate. It functions in the pathway carbohydrate biosynthesis; gluconeogenesis. Its pathway is carbohydrate degradation; glycolysis; D-glyceraldehyde 3-phosphate from glycerone phosphate: step 1/1. Its function is as follows. Involved in the gluconeogenesis. Catalyzes stereospecifically the conversion of dihydroxyacetone phosphate (DHAP) to D-glyceraldehyde-3-phosphate (G3P). In Streptococcus suis (strain 98HAH33), this protein is Triosephosphate isomerase.